The following is a 251-amino-acid chain: Flap endonuclease Xni (251 aa).

D104 provides a ligand contact to Mg(2+). The 90-residue stretch at 160–249 folds into the 5'-3' exonuclease domain; sequence VQPQQLPDYW…IDGNLQQLRL (90 aa). Positions 171, 172, 180, 182, and 185 each coordinate K(+). The tract at residues 184–189 is interaction with DNA; that stretch reads GIGPKS.

This sequence belongs to the Xni family. Mg(2+) is required as a cofactor. Requires K(+) as cofactor.

Its function is as follows. Has flap endonuclease activity. During DNA replication, flap endonucleases cleave the 5'-overhanging flap structure that is generated by displacement synthesis when DNA polymerase encounters the 5'-end of a downstream Okazaki fragment. In Escherichia coli O139:H28 (strain E24377A / ETEC), this protein is Flap endonuclease Xni.